Reading from the N-terminus, the 297-residue chain is Protein COFACTOR ASSEMBLY OF COMPLEX C SUBUNIT B CCB4, chloroplastic (297 aa).

A chloroplast-targeting transit peptide spans 1 to 33 (MEARIILLRIQIPWSANRQFSHPPLDFPRFIRA). Topologically, residues 34 to 70 (SSSSTSQKPKTYEGPKPRKNLVADFISKNDDLVRSLP) are stromal. A helical transmembrane segment spans residues 71–91 (IYVGGASLLAVLFNRTVSGIA). At 92–103 (PVADASSSQSRA) the chain is on the lumenal side. The helical transmembrane segment at 104-124 (DLLALGLAVTNLLTGLVWLSI) threads the bilayer. Topologically, residues 125 to 297 (RPKSITPVNP…DSDEISRVTV (173 aa)) are stromal.

The protein localises to the plastid. It localises to the chloroplast thylakoid membrane. In terms of biological role, required for the biogenesis and accumulation of native cytochrome b6 in the thylakoid membrane. Controls the conversion of apocytochrome b6 to holocytochrome b6. Required for covalent binding of the c-type heme to cytochrome b6. The polypeptide is Protein COFACTOR ASSEMBLY OF COMPLEX C SUBUNIT B CCB4, chloroplastic (Arabidopsis thaliana (Mouse-ear cress)).